An 865-amino-acid chain; its full sequence is Xylosyltransferase 2 (865 aa).

Over 1 to 15 (MVASARVQKLVRRYK) the chain is Cytoplasmic. A helical; Signal-anchor for type II membrane protein transmembrane segment spans residues 16-36 (LAIATALAILLLQGLVVWSFS). At 37–865 (GLEEDEAGEK…GPVKADGRLR (829 aa)) the chain is on the lumenal side. Residues 41 to 157 (DEAGEKGRQR…EGAPQPTDNG (117 aa)) are disordered. Positions 53–65 (RPLDPGEGSKDTD) are enriched in basic and acidic residues. The span at 73 to 82 (STGRRHGRWR) shows a compositional bias: basic residues. Asn122 carries N-linked (GlcNAc...) asparagine glycosylation. A compositionally biased stretch (low complexity) spans 125–137 (GAAAGEALVGAAG). 4 disulfide bridges follow: Cys162–Cys190, Cys206–Cys448, Cys467–Cys480, and Cys469–Cys478. UDP-alpha-D-xylose-binding positions include Val239, Asp267, and 296–298 (TIW). A glycan (N-linked (GlcNAc...) asparagine) is linked at Asn327. A UDP-alpha-D-xylose-binding site is contributed by 400–401 (DW). UDP-alpha-D-xylose-binding positions include Ser481 and 504–505 (RK). 2 cysteine pairs are disulfide-bonded: Cys581/Cys833 and Cys826/Cys839. Asn683 carries N-linked (GlcNAc...) asparagine glycosylation. Positions 846 to 865 (SLSPDPKSELGPVKADGRLR) are disordered.

The protein belongs to the glycosyltransferase 14 family. XylT subfamily. Monomer. The cofactor is Mg(2+). It depends on Mn(2+) as a cofactor. Contains disulfide bonds.

The protein localises to the golgi apparatus membrane. Its subcellular location is the secreted. The enzyme catalyses UDP-alpha-D-xylose + L-seryl-[protein] = 3-O-(beta-D-xylosyl)-L-seryl-[protein] + UDP + H(+). It functions in the pathway glycan metabolism; chondroitin sulfate biosynthesis. Its pathway is glycan metabolism; heparan sulfate biosynthesis. Catalyzes the first step in the biosynthesis of chondroitin sulfate, heparan sulfate and dermatan sulfate proteoglycans, such as DCN. Transfers D-xylose from UDP-D-xylose to specific serine residues of the core protein. The protein is Xylosyltransferase 2 (XYLT2) of Pan troglodytes (Chimpanzee).